Reading from the N-terminus, the 146-residue chain is 3-hydroxyacyl-[acyl-carrier-protein] dehydratase FabZ (146 aa).

Histidine 49 is a catalytic residue.

The protein belongs to the thioester dehydratase family. FabZ subfamily.

It is found in the cytoplasm. The catalysed reaction is a (3R)-hydroxyacyl-[ACP] = a (2E)-enoyl-[ACP] + H2O. In terms of biological role, involved in unsaturated fatty acids biosynthesis. Catalyzes the dehydration of short chain beta-hydroxyacyl-ACPs and long chain saturated and unsaturated beta-hydroxyacyl-ACPs. The chain is 3-hydroxyacyl-[acyl-carrier-protein] dehydratase FabZ from Psychrobacter arcticus (strain DSM 17307 / VKM B-2377 / 273-4).